Here is a 184-residue protein sequence, read N- to C-terminus: ATP-dependent protease subunit HslV (184 aa).

Residue threonine 12 is part of the active site. Na(+) is bound by residues alanine 166, cysteine 169, and threonine 172.

Belongs to the peptidase T1B family. HslV subfamily. A double ring-shaped homohexamer of HslV is capped on each side by a ring-shaped HslU homohexamer. The assembly of the HslU/HslV complex is dependent on binding of ATP.

It localises to the cytoplasm. The catalysed reaction is ATP-dependent cleavage of peptide bonds with broad specificity.. Its activity is regulated as follows. Allosterically activated by HslU binding. In terms of biological role, protease subunit of a proteasome-like degradation complex believed to be a general protein degrading machinery. The sequence is that of ATP-dependent protease subunit HslV from Brucella ovis (strain ATCC 25840 / 63/290 / NCTC 10512).